The chain runs to 2551 residues: Piezo-type mechanosensitive ion channel component (2551 aa).

A run of 8 helical transmembrane segments spans residues 5-25, 27-47, 56-76, 106-126, 204-226, 231-250, 256-276, and 320-340; these read YACMVLQRIVVPAVLVLAALM, PVGISFVYLLMFFVSPFVPLA, VTAFFIILLTLSTLVLLGHIT, FIDLQPFAIIEWLVPEVLVFA, IHFEGLVKISPLFCLATLFFAAV, VPGGFYFLIFLLSGTYWATC, GFALLLRCVMVVLVLHSLSIV, and LSLDSYLNPFALFFAYFALAL. Residues 354 to 375 are disordered; that stretch reads STRKARTPQPLESGSSVAPSVT. Residues 363 to 375 are compositionally biased toward polar residues; that stretch reads PLESGSSVAPSVT. The next 9 helical transmembrane spans lie at 395 to 415, 424 to 444, 463 to 483, 516 to 536, 548 to 568, 588 to 608, 611 to 631, 639 to 659, and 695 to 715; these read TTTSILDQISYGFVSVGGFIY, ILMMAWSIVYHSWLTFVLLLS, PFIVLYAEALLIAQYIYGMDL, VPLIVKTAFVLMFWVTSRQFF, LADFIAPLQITVGSAGSSYLI, LLVRLWIWLLVLVIFLCAITG, MTGFRICYMALFLFFLLVFQS, IMYGFWLFLIFYAMSILILIY, and FLHLVSPTIIVILTVIQVHYF. The span at 731–741 shows a compositional bias: polar residues; that stretch reads GSAQQKPTETT. The interval 731–772 is disordered; the sequence is GSAQQKPTETTALEPAPSKRRGSAGSLRKSQGPSAEAAPGAT. 12 consecutive transmembrane segments (helical) span residues 819–839, 857–877, 910–930, 973–993, 994–1014, 1022–1042, 1071–1091, 1152–1172, 1174–1194, 1198–1218, 1239–1259, and 1275–1295; these read IAAFVCSVSEVCVLHIIFVGF, LISFIVTVIVLSKMIYQIEYL, LMSLLRTYIIYMVIVTMHAVI, LNFGFYKFGIEISLIALVSTI, TYRQDIVAVVYALWLVVLLLL, IWGVFQAFFAISILTQYIVLV, GALHFNHVPKLIFDFIVLVIL, VLCGFYWFTLAVVFLAGTNIA, LLALGYLIGAFIFLWQGSDFY, IHTIIFRWKWLLAFNVANILI, WLVHMLGITCTSNVLTEQIML, and ITHQVVLLWDTICFAFIIFQL. Disordered regions lie at residues 1426-1521 and 1592-1658; these read NITE…AKDS and ESDE…PQQQ. The span at 1430–1448 shows a compositional bias: basic and acidic residues; the sequence is SEMKMQRRKTLYDKSKDAP. Residues 1466-1477 show a composition bias toward low complexity; that stretch reads ATASSSASPAPT. Residues 1497–1511 show a composition bias toward basic and acidic residues; it reads QTSKETSDSKSKMEV. Composition is skewed to low complexity over residues 1621–1634 and 1644–1658; these read PTSTTLNTNTTTTP and LQPLQPNTTSTPQQQ. The next 4 helical transmembrane spans lie at 1718-1738, 1741-1761, 1770-1790, and 1817-1837; these read ISSWYALLANTDLICYIVVFI, VVNASLISLPLPIMVFLWGTL, FWVTLIAYTQAIVLIKCIFQF, and AHYAIYDLILLLVLFLHRYLL. The tract at residues 1854–1876 is disordered; the sequence is FTKPTASIDERDDSDNLSQPDSR. 7 helical membrane-spanning segments follow: residues 1937-1957, 1979-1999, 2008-2028, 2033-2053, 2075-2095, 2151-2171, and 2431-2451; these read ALMFLCDFVNFFVLLFGFTAF, IPFLIMLLVQFLLIVIDRALY, IIFHFFSVIGIHIWMFFVVPA, TFNSLAPPIIFYVIKCFYMLL, FSMVNMIAFKVYMQIPFLYEL, IMGGTIVLLIVICIWGPLCLF, and TFSFLTAGGIIGLYTTFVLLA. Residues 2522–2551 are disordered; it reads EYVDDDGDTDSIPSRMSVRRPEQLQPQQPQ.

This sequence belongs to the PIEZO (TC 1.A.75) family.

It localises to the cell membrane. Component of a mechanosensitive channel required for rapidly adapting mechanically activated (MA) currents. Plays a major role in nociception (response to strong or painful touch). Required for maintaining the mechanosensitivity of tarsal bristle mechanosensors. During their evalulation of potential egg-laying sites, females determine the softest substrate for their eggs first by making a coarse evaluation of substrate hardness using mechanosensitive channels nan and Piezo in the leg tarsal bristles, followed by a much finer assessment using nan, iav and Tmc mechanosensitive channels on the labellum. Acts in the nompC- and nan-expressing neurons of the female leg tarsals, to sense the mild differences in egg-laying substrate stiffness. This Drosophila melanogaster (Fruit fly) protein is Piezo-type mechanosensitive ion channel component.